The primary structure comprises 251 residues: Coenzyme F420:L-glutamate ligase (251 aa).

Residues 9–12, 38–39, and Lys-43 each bind GTP; these read LPEI and ST. A divalent metal cation is bound at residue Asp-113. Asn-116 is a binding site for GTP. The a divalent metal cation site is built by Asp-149, Thr-150, and Glu-207. 205–212 lines the GTP pocket; sequence AGEGDGGT.

This sequence belongs to the CofE family. As to quaternary structure, homodimer. Mg(2+) serves as cofactor. The cofactor is Mn(2+). K(+) is required as a cofactor.

The catalysed reaction is oxidized coenzyme F420-0 + GTP + L-glutamate = oxidized coenzyme F420-1 + GDP + phosphate + H(+). It catalyses the reaction oxidized coenzyme F420-1 + GTP + L-glutamate = oxidized coenzyme F420-2 + GDP + phosphate + H(+). Its pathway is cofactor biosynthesis; coenzyme F420 biosynthesis. Functionally, catalyzes the GTP-dependent successive addition of two or more gamma-linked L-glutamates to the L-lactyl phosphodiester of 7,8-didemethyl-8-hydroxy-5-deazariboflavin (F420-0) to form coenzyme F420-0-glutamyl-glutamate (F420-2) or polyglutamated F420 derivatives. This chain is Coenzyme F420:L-glutamate ligase, found in Halorubrum lacusprofundi (strain ATCC 49239 / DSM 5036 / JCM 8891 / ACAM 34).